Here is a 322-residue protein sequence, read N- to C-terminus: Probable transcription factor KAN3 (322 aa).

The tract at residues 1 to 35 is disordered; that stretch reads MELFPSQPDLYLKISRRREEEQEKESQELQEQEVE. Basic and acidic residues predominate over residues 17–35; the sequence is RREEEQEKESQELQEQEVE. One can recognise an HTH myb-type domain in the interval 161–221; that stretch reads GVRAPRMRWT…HLQMYRTIKS (61 aa). A DNA-binding region (H-T-H motif) is located at residues 192-217; sequence PKSVLELMDVQDLTLAHVKSHLQMYR. 2 disordered regions span residues 222-244 and 267-322; these read TEKP…NSER and KASS…NLSP. Composition is skewed to polar residues over residues 224-241 and 299-322; these read KPTT…SQVN and LTGT…NLSP.

Expressed in developing phloem.

The protein resides in the nucleus. Its function is as follows. Probable transcription factor that regulates lateral organ polarity. Plays a role in lateral root formation and development. The polypeptide is Probable transcription factor KAN3 (KAN3) (Arabidopsis thaliana (Mouse-ear cress)).